The following is a 209-amino-acid chain: Outer-membrane lipoprotein carrier protein (209 aa).

Positions 1 to 21 (MHRQLRYAVLATALFASTAFA) are cleaved as a signal peptide.

This sequence belongs to the LolA family. Monomer.

The protein resides in the periplasm. Its function is as follows. Participates in the translocation of lipoproteins from the inner membrane to the outer membrane. Only forms a complex with a lipoprotein if the residue after the N-terminal Cys is not an aspartate (The Asp acts as a targeting signal to indicate that the lipoprotein should stay in the inner membrane). This is Outer-membrane lipoprotein carrier protein from Xanthomonas oryzae pv. oryzae (strain MAFF 311018).